The sequence spans 159 residues: MNIKIVCVGKLKEKYFKDGIAEYVKRMSRFAKVKIVQVPDEKAPEKLSPAEMEQVKEIEGKRILDKIKDKEYVYVTAIKGKERTSEAFAKELSDLTTYGHSDITFVIGGSLGTSDAVNKRADDLISFGKFTMPHQLMRLVLIEQIYRAFMINSGSPYHK.

An S-adenosyl-L-methionine-binding site is contributed by G108.

The protein belongs to the RNA methyltransferase RlmH family. Homodimer.

The protein resides in the cytoplasm. The enzyme catalyses pseudouridine(1915) in 23S rRNA + S-adenosyl-L-methionine = N(3)-methylpseudouridine(1915) in 23S rRNA + S-adenosyl-L-homocysteine + H(+). Specifically methylates the pseudouridine at position 1915 (m3Psi1915) in 23S rRNA. This Lactobacillus johnsonii (strain CNCM I-12250 / La1 / NCC 533) protein is Ribosomal RNA large subunit methyltransferase H.